Here is a 296-residue protein sequence, read N- to C-terminus: Phosphoribosylaminoimidazole-succinocarboxamide synthase (296 aa).

This sequence belongs to the SAICAR synthetase family.

The enzyme catalyses 5-amino-1-(5-phospho-D-ribosyl)imidazole-4-carboxylate + L-aspartate + ATP = (2S)-2-[5-amino-1-(5-phospho-beta-D-ribosyl)imidazole-4-carboxamido]succinate + ADP + phosphate + 2 H(+). The protein operates within purine metabolism; IMP biosynthesis via de novo pathway; 5-amino-1-(5-phospho-D-ribosyl)imidazole-4-carboxamide from 5-amino-1-(5-phospho-D-ribosyl)imidazole-4-carboxylate: step 1/2. The polypeptide is Phosphoribosylaminoimidazole-succinocarboxamide synthase (Citrifermentans bemidjiense (strain ATCC BAA-1014 / DSM 16622 / JCM 12645 / Bem) (Geobacter bemidjiensis)).